The following is a 552-amino-acid chain: Putative acetolactate synthase large subunit IlvB2 (552 aa).

Glu-48 serves as a coordination point for thiamine diphosphate. Residues 262-285 (FGDG…VGVS) and 309-328 (DPDP…ITTS) each bind FAD. The tract at residues 394–474 (TCISWTFRGI…VTWAVLNDGQ (81 aa)) is thiamine pyrophosphate binding. Asp-445 contributes to the Mg(2+) binding site.

The protein belongs to the TPP enzyme family. As to quaternary structure, heterodimer of large catalytic subunit and small regulatory subunit. Mg(2+) serves as cofactor. Thiamine diphosphate is required as a cofactor.

The catalysed reaction is 2 pyruvate + H(+) = (2S)-2-acetolactate + CO2. It functions in the pathway amino-acid biosynthesis; L-isoleucine biosynthesis; L-isoleucine from 2-oxobutanoate: step 1/4. The protein operates within amino-acid biosynthesis; L-valine biosynthesis; L-valine from pyruvate: step 1/4. In terms of biological role, catalyzes the conversion of 2 pyruvate molecules into acetolactate in the first common step of the biosynthetic pathway of the branched-amino acids such as leucine, isoleucine, and valine. In Mycobacterium tuberculosis (strain ATCC 25618 / H37Rv), this protein is Putative acetolactate synthase large subunit IlvB2 (ilvB2).